The chain runs to 263 residues: Transcription factor bHLH27 (263 aa).

Over residues 32-47 the composition is skewed to low complexity; that stretch reads EAFSGSGESSSPDGAA. Residues 32 to 61 form a disordered region; that stretch reads EAFSGSGESSSPDGAATSPASSKNVVSERN. Polar residues predominate over residues 49–58; the sequence is SPASSKNVVS. Positions 50–99 constitute a bHLH domain; it reads PASSKNVVSERNRRQKLNQRLFALRSVVPNISKLDKASVIKDSIDYMQEL.

As to quaternary structure, homodimer. Expressed constitutively in roots, leaves, stems, and flowers.

It is found in the nucleus. The protein is Transcription factor bHLH27 (BHLH27) of Arabidopsis thaliana (Mouse-ear cress).